A 733-amino-acid chain; its full sequence is Folic acid synthesis protein fol1 (733 aa).

DHNA regions lie at residues 55 to 167 and 179 to 277; these read VVVE…YAER and IEFS…QIYR. Y281 carries the phosphotyrosine modification. Residues 295 to 454 form an HPK region; the sequence is NKIAYLSFGS…LPSQGIRLYS (160 aa). Residues 465-724 enclose the Pterin-binding domain; that stretch reads ALTMGILNVT…DTKEMSKVVG (260 aa). The tract at residues 467 to 733 is DHPS; that stretch reads TMGILNVTPD…GMANAIRYVP (267 aa). Mg(2+) is bound at residue N472. (7,8-dihydropterin-6-yl)methyl diphosphate contacts are provided by residues T511, D546, N565, D637, K677, and 712–714; that span reads RVH.

It in the N-terminal section; belongs to the DHNA family. In the central section; belongs to the HPPK family. This sequence in the C-terminal section; belongs to the DHPS family. Mg(2+) is required as a cofactor.

Its subcellular location is the cytoplasm. It carries out the reaction 7,8-dihydroneopterin = 6-hydroxymethyl-7,8-dihydropterin + glycolaldehyde. The enzyme catalyses 6-hydroxymethyl-7,8-dihydropterin + ATP = (7,8-dihydropterin-6-yl)methyl diphosphate + AMP + H(+). The catalysed reaction is (7,8-dihydropterin-6-yl)methyl diphosphate + 4-aminobenzoate = 7,8-dihydropteroate + diphosphate. The protein operates within cofactor biosynthesis; tetrahydrofolate biosynthesis; 2-amino-4-hydroxy-6-hydroxymethyl-7,8-dihydropteridine diphosphate from 7,8-dihydroneopterin triphosphate: step 3/4. Its pathway is cofactor biosynthesis; tetrahydrofolate biosynthesis; 2-amino-4-hydroxy-6-hydroxymethyl-7,8-dihydropteridine diphosphate from 7,8-dihydroneopterin triphosphate: step 4/4. It participates in cofactor biosynthesis; tetrahydrofolate biosynthesis; 7,8-dihydrofolate from 2-amino-4-hydroxy-6-hydroxymethyl-7,8-dihydropteridine diphosphate and 4-aminobenzoate: step 1/2. In terms of biological role, catalyzes three sequential steps of tetrahydrofolate biosynthesis. The protein is Folic acid synthesis protein fol1 (fol1) of Schizosaccharomyces pombe (strain 972 / ATCC 24843) (Fission yeast).